The primary structure comprises 690 residues: Elongation factor G (690 aa).

The tr-type G domain maps to 8–283 (EDYRNFGIMA…AVVDYLPSPV (276 aa)). Residues 17-24 (AHIDAGKT), 81-85 (DTPGH), and 135-138 (NKMD) contribute to the GTP site.

This sequence belongs to the TRAFAC class translation factor GTPase superfamily. Classic translation factor GTPase family. EF-G/EF-2 subfamily.

Its subcellular location is the cytoplasm. Its function is as follows. Catalyzes the GTP-dependent ribosomal translocation step during translation elongation. During this step, the ribosome changes from the pre-translocational (PRE) to the post-translocational (POST) state as the newly formed A-site-bound peptidyl-tRNA and P-site-bound deacylated tRNA move to the P and E sites, respectively. Catalyzes the coordinated movement of the two tRNA molecules, the mRNA and conformational changes in the ribosome. This is Elongation factor G from Rhodopseudomonas palustris (strain HaA2).